We begin with the raw amino-acid sequence, 517 residues long: N-acetylglucosamine-1-phosphodiester alpha-N-acetylglucosaminidase (517 aa).

Positions 1–25 (MAAPRGPGLFLIPALLGLLGVAWCS) are cleaved as a signal peptide. Positions 26–49 (LSFGVSRDDDLLLPYPLARRRPSR) are cleaved as a propeptide — removed in mature form. Residues 49–75 (RDCARVRSGSPEQESWPPPPTNPGASH) are disordered. Topologically, residues 50–453 (DCARVRSGSP…ASFTRTTWLA (404 aa)) are lumenal. Intrachain disulfides connect C116–C149, C133–C324, C308–C315, C363–C374, and C381–C390. Residues N215 and N297 are each glycosylated (N-linked (GlcNAc...) asparagine). Residues 359 to 391 (SELDCGPSNCSQHGLCTETGCHCDAGWTGSNCS) form the EGF-like domain. N367, N389, and N421 each carry an N-linked (GlcNAc...) asparagine glycan. A helical membrane pass occupies residues 454 to 474 (LTLTLIFLLLISTGVNVSLFL). Residues 475 to 517 (GSRAERNRHLDGDYVYHPLQEVNGEALTAEKEHMEETSNPFKD) lie on the Cytoplasmic side of the membrane. A Tyrosine-based internalization motif motif is present at residues 488-491 (YVYH). Residues 488–495 (YVYHPLQE) are mediates the interaction with AP4M1. The NPF internalization motif motif lies at 511–515 (TSNPF).

In terms of assembly, homotetramer arranged as two disulfide-linked homodimers. Interacts with AP4M1. In terms of processing, the precursor is cleaved and activated in the trans-Golgi network by a furin endopeptidase.

It localises to the golgi apparatus. It is found in the golgi stack membrane. Its subcellular location is the trans-Golgi network. The catalysed reaction is N(4)-[6-(N-acetyl-alpha-D-glucosaminyl-1-phospho)-alpha-D-mannosyl-(1-&gt;2)-alpha-D-mannosyl-(glycan)]-L-asparaginyl-[protein] + H2O = N(4)-[6-phospho-alpha-D-mannosyl-(1-&gt;2)-alpha-D-mannosyl-(glycan)]-L-asparaginyl-[protein] + N-acetyl-D-glucosamine + H(+). It participates in protein modification; protein glycosylation. Catalyzes the second step in the formation of the mannose 6-phosphate targeting signal on lysosomal enzyme oligosaccharides by removing GlcNAc residues from GlcNAc-alpha-P-mannose moieties, which are formed in the first step. Also hydrolyzes UDP-GlcNAc, a sugar donor for Golgi N-acetylglucosaminyltransferases. This is N-acetylglucosamine-1-phosphodiester alpha-N-acetylglucosaminidase (Nagpa) from Mus musculus (Mouse).